A 318-amino-acid polypeptide reads, in one-letter code: Putative 2-hydroxyacid dehydrogenase SH0752 (318 aa).

NAD(+) is bound by residues 155–156, 234–236, and Asp-260; these read EI and AGR. The active site involves Arg-236. The active site involves Glu-265. Catalysis depends on His-283, which acts as the Proton donor. NAD(+) is bound at residue 283–286; that stretch reads HIGN.

The protein belongs to the D-isomer specific 2-hydroxyacid dehydrogenase family.

The chain is Putative 2-hydroxyacid dehydrogenase SH0752 from Staphylococcus haemolyticus (strain JCSC1435).